Here is a 334-residue protein sequence, read N- to C-terminus: tRNA N6-adenosine threonylcarbamoyltransferase (334 aa).

Positions 111 and 115 each coordinate Fe cation. Residues 134–138, Asp167, Gly180, Asp184, and Asn272 each bind substrate; that span reads IVSGG. Fe cation is bound at residue Asp300.

Belongs to the KAE1 / TsaD family. Requires Fe(2+) as cofactor.

The protein localises to the cytoplasm. The enzyme catalyses L-threonylcarbamoyladenylate + adenosine(37) in tRNA = N(6)-L-threonylcarbamoyladenosine(37) in tRNA + AMP + H(+). Functionally, required for the formation of a threonylcarbamoyl group on adenosine at position 37 (t(6)A37) in tRNAs that read codons beginning with adenine. Is involved in the transfer of the threonylcarbamoyl moiety of threonylcarbamoyl-AMP (TC-AMP) to the N6 group of A37, together with TsaE and TsaB. TsaD likely plays a direct catalytic role in this reaction. The chain is tRNA N6-adenosine threonylcarbamoyltransferase from Dictyoglomus turgidum (strain DSM 6724 / Z-1310).